Consider the following 448-residue polypeptide: tRNA-2-methylthio-N(6)-dimethylallyladenosine synthase (448 aa).

In terms of domain architecture, MTTase N-terminal spans 3-120 (KKLFIKTHGC…LPTMLDSRQG (118 aa)). Residues cysteine 12, cysteine 49, cysteine 83, cysteine 158, cysteine 162, and cysteine 165 each contribute to the [4Fe-4S] cluster site. A Radical SAM core domain is found at 144–376 (TSDGATAFVS…QERLNQQTMQ (233 aa)). The TRAM domain occupies 379-444 (RRMVGNTERI…PNSLRGDLAS (66 aa)).

This sequence belongs to the methylthiotransferase family. MiaB subfamily. As to quaternary structure, monomer. The cofactor is [4Fe-4S] cluster.

The protein resides in the cytoplasm. It carries out the reaction N(6)-dimethylallyladenosine(37) in tRNA + (sulfur carrier)-SH + AH2 + 2 S-adenosyl-L-methionine = 2-methylsulfanyl-N(6)-dimethylallyladenosine(37) in tRNA + (sulfur carrier)-H + 5'-deoxyadenosine + L-methionine + A + S-adenosyl-L-homocysteine + 2 H(+). Its function is as follows. Catalyzes the methylthiolation of N6-(dimethylallyl)adenosine (i(6)A), leading to the formation of 2-methylthio-N6-(dimethylallyl)adenosine (ms(2)i(6)A) at position 37 in tRNAs that read codons beginning with uridine. The sequence is that of tRNA-2-methylthio-N(6)-dimethylallyladenosine synthase from Chromohalobacter salexigens (strain ATCC BAA-138 / DSM 3043 / CIP 106854 / NCIMB 13768 / 1H11).